Reading from the N-terminus, the 318-residue chain is DNA-directed RNA polymerase subunit alpha 2 (318 aa).

Residues 1-227 (MALENLLHPT…NQLRNIVDIE (227 aa)) form an alpha N-terminal domain (alpha-NTD) region. The tract at residues 242-318 (INPILLKHVE…TLIENWPQDL (77 aa)) is alpha C-terminal domain (alpha-CTD).

The protein belongs to the RNA polymerase alpha chain family. Homodimer. The RNAP catalytic core consists of 2 alpha, 1 beta, 1 beta' and 1 omega subunit. When a sigma factor is associated with the core the holoenzyme is formed, which can initiate transcription.

The catalysed reaction is RNA(n) + a ribonucleoside 5'-triphosphate = RNA(n+1) + diphosphate. DNA-dependent RNA polymerase catalyzes the transcription of DNA into RNA using the four ribonucleoside triphosphates as substrates. The chain is DNA-directed RNA polymerase subunit alpha 2 from Francisella tularensis subsp. novicida (strain U112).